Consider the following 270-residue polypeptide: Sulfur carrier protein FdhD (270 aa).

2 stretches are compositionally biased toward basic and acidic residues: residues 1-10 and 20-30; these read MSMQDHDRTE and RHLDGSSRPDW. The disordered stretch occupies residues 1–30; that stretch reads MSMQDHDRTEQGMTSLAVTRHLDGSSRPDW. Cys-117 acts as the Cysteine persulfide intermediate in catalysis.

This sequence belongs to the FdhD family.

It localises to the cytoplasm. In terms of biological role, required for formate dehydrogenase (FDH) activity. Acts as a sulfur carrier protein that transfers sulfur from IscS to the molybdenum cofactor prior to its insertion into FDH. This Chromobacterium violaceum (strain ATCC 12472 / DSM 30191 / JCM 1249 / CCUG 213 / NBRC 12614 / NCIMB 9131 / NCTC 9757 / MK) protein is Sulfur carrier protein FdhD.